Consider the following 53-residue polypeptide: uncharacterized protein (53 aa).

The interval 34-53 (RKEKGKRHAAPLSLMGVHKR) is disordered.

This is an uncharacterized protein from Treponema pallidum (strain Nichols).